Reading from the N-terminus, the 130-residue chain is RxLR effector protein PITG_14783 (130 aa).

The signal sequence occupies residues 1–20 (MRLPYVFAATMATLLVSSNA). Positions 27 to 58 (AMLSSPNEQHQRQLRSHQTPVEDQEPDEERSL) are disordered. A RxLR-dEER motif is present at residues 38-56 (RQLRSHQTPVEDQEPDEER).

This sequence belongs to the RxLR effector family.

The protein resides in the secreted. It is found in the host nucleus. The protein localises to the host cytoplasm. Functionally, effector that enhances P.infestans colonization of Nicotiana benthamiana leaves. The polypeptide is RxLR effector protein PITG_14783 (Phytophthora infestans (strain T30-4) (Potato late blight agent)).